A 258-amino-acid polypeptide reads, in one-letter code: Myelin proteolipid protein (258 aa).

Residues 1-22 lie on the Cytoplasmic side of the membrane; sequence MFPVRHALLCKALGCYDCCIRC. S-palmitoyl cysteine attachment occurs at residues cysteine 18, cysteine 19, and cysteine 22. A helical membrane pass occupies residues 23 to 48; the sequence is LGAVPYPSLVSTLLCFTGMALFCGCG. The Extracellular portion of the chain corresponds to 49–82; it reads HEALAHTEVLVETYFVRNIQDYVILASFIKYFQY. A helical transmembrane segment spans residues 83–103; it reads VIYGLASFFFLYCILLLAEGF. The Cytoplasmic portion of the chain corresponds to 104–128; sequence YTTSAVKQTFGEFRSTRCGRCLSLT. S-palmitoyl cysteine attachment occurs at residues cysteine 121 and cysteine 124. Residues 129 to 149 traverse the membrane as a helical segment; it reads FIIVTYVLAVIWLAVFAFTAI. At 150 to 218 the chain is on the extracellular side; that stretch reads PSSSSLIWHR…KTKEFFVTYD (69 aa). Cysteines 181 and 200 form a disulfide. A helical transmembrane segment spans residues 219 to 239; sequence LYIAAFAGAGIALLALFLYVV. At 240 to 258 the chain is on the cytoplasmic side; the sequence is ATTYNYAVLRFLGRKGLRC.

Belongs to the myelin proteolipid protein family. In terms of tissue distribution, central nervous system. Highest levels in spinal cord and medulla oblongata.

The protein resides in the cell membrane. In terms of biological role, this is the major myelin protein from the central nervous system. It plays an important role in the formation or maintenance of the multilamellar structure of myelin. May be involved in neuron and glial cell differentiation. The chain is Myelin proteolipid protein (plp) from Oncorhynchus mykiss (Rainbow trout).